A 165-amino-acid chain; its full sequence is Large ribosomal subunit protein uL10 (165 aa).

This sequence belongs to the universal ribosomal protein uL10 family. In terms of assembly, part of the ribosomal stalk of the 50S ribosomal subunit. The N-terminus interacts with L11 and the large rRNA to form the base of the stalk. The C-terminus forms an elongated spine to which L12 dimers bind in a sequential fashion forming a multimeric L10(L12)X complex.

Functionally, forms part of the ribosomal stalk, playing a central role in the interaction of the ribosome with GTP-bound translation factors. This is Large ribosomal subunit protein uL10 from Burkholderia cenocepacia (strain HI2424).